The chain runs to 157 residues: Type II restriction enzyme PvuII (157 aa).

Mg(2+) is bound by residues aspartate 58 and glutamate 68.

Homodimer. Requires Mg(2+) as cofactor.

The enzyme catalyses Endonucleolytic cleavage of DNA to give specific double-stranded fragments with terminal 5'-phosphates.. In terms of biological role, a P subtype restriction enzyme that recognizes the double-stranded sequence 5'-CAGCTG-3' and cleaves after G-3. This Proteus hauseri protein is Type II restriction enzyme PvuII (pvuIIR).